Here is a 266-residue protein sequence, read N- to C-terminus: Ras-like protein family member 12 (266 aa).

Residues 27–34, 74–78, and 134–137 each bind GTP; these read GRRGAGKS, DTADL, and NKLD.

This sequence belongs to the small GTPase superfamily. Ras family.

It carries out the reaction GTP + H2O = GDP + phosphate + H(+). This Homo sapiens (Human) protein is Ras-like protein family member 12 (RASL12).